A 327-amino-acid chain; its full sequence is Probable pectinesterase A (327 aa).

A signal peptide spans 1–19 (MHTPYLLGALAALAATAVG). N-linked (GlcNAc...) asparagine glycosylation occurs at Asn-84. Gln-145 serves as a coordination point for substrate. Asp-168 serves as the catalytic Proton donor. Asp-189 (nucleophile) is an active-site residue. The substrate site is built by Arg-249 and Trp-251. The N-linked (GlcNAc...) asparagine glycan is linked to Asn-288.

The protein belongs to the pectinesterase family.

Its subcellular location is the secreted. It carries out the reaction [(1-&gt;4)-alpha-D-galacturonosyl methyl ester](n) + n H2O = [(1-&gt;4)-alpha-D-galacturonosyl](n) + n methanol + n H(+). Its pathway is glycan metabolism; pectin degradation; 2-dehydro-3-deoxy-D-gluconate from pectin: step 1/5. In terms of biological role, involved in maceration and soft-rotting of plant tissue. This chain is Probable pectinesterase A (pmeA), found in Aspergillus niger (strain ATCC MYA-4892 / CBS 513.88 / FGSC A1513).